The sequence spans 506 residues: Nucleosome assembly protein 1-like 3 (506 aa).

2 disordered regions span residues Met-1–Asn-95 and Pro-157–Asp-307. Low complexity predominate over residues Ser-35–Ser-70. Residues Pro-157–Gln-178 show a composition bias toward acidic residues. Residues Pro-196–Lys-296 show a composition bias toward basic and acidic residues.

It belongs to the nucleosome assembly protein (NAP) family.

It is found in the nucleus. This is Nucleosome assembly protein 1-like 3 (NAP1L3) from Homo sapiens (Human).